The sequence spans 302 residues: Glutaminase (302 aa).

Substrate is bound by residues Ser61, Asn111, Glu155, Asn162, Tyr186, Tyr238, and Val256.

This sequence belongs to the glutaminase family. As to quaternary structure, homotetramer.

The enzyme catalyses L-glutamine + H2O = L-glutamate + NH4(+). This is Glutaminase from Pseudomonas putida (strain ATCC 700007 / DSM 6899 / JCM 31910 / BCRC 17059 / LMG 24140 / F1).